Here is a 621-residue protein sequence, read N- to C-terminus: F-box only protein 21 (621 aa).

Positions 28–77 constitute an F-box domain; that stretch reads SCLVNLPGEVLEYILCCGSLTAADIGRVSSTCRRLRELCQSSGKVWKEQF.

As to quaternary structure, interacts with SKP1 and CUL1.

In terms of biological role, substrate-recognition component of the SCF (SKP1-CUL1-F-box protein)-type E3 ubiquitin ligase complex. The sequence is that of F-box only protein 21 (FBXO21) from Pongo abelii (Sumatran orangutan).